A 557-amino-acid polypeptide reads, in one-letter code: Tripeptidyl-peptidase 1 (557 aa).

The signal sequence occupies residues 1 to 16 (MRVAVFVLSFIWLVNG). Residues 17-190 (ELLEADQDAV…WEGARQAILG (174 aa)) constitute a propeptide, removed in mature form. Asn-53 carries an N-linked (GlcNAc...) asparagine glycan. Cys-107 and Cys-118 are oxidised to a cystine. Positions 194-557 (GVTPAVIRNR…YPVFLASLMD (364 aa)) constitute a Peptidase S53 domain. Asn-205 and Asn-216 each carry an N-linked (GlcNAc...) asparagine glycan. Active-site charge relay system residues include Glu-266 and Asp-270. N-linked (GlcNAc...) asparagine glycans are attached at residues Asn-280, Asn-307, and Asn-438. Intrachain disulfides connect Cys-359/Cys-521 and Cys-517/Cys-532. Catalysis depends on Ser-470, which acts as the Charge relay system. Residues Asp-512 and Val-513 each coordinate Ca(2+). Asp-538 is a binding site for Ca(2+).

It depends on Ca(2+) as a cofactor. In terms of processing, activated by autocatalytic proteolytical processing.

It is found in the lysosome. The catalysed reaction is Release of an N-terminal tripeptide from a polypeptide, but also has endopeptidase activity.. In terms of biological role, lysosomal serine protease with tripeptidyl-peptidase I activity. May act as a non-specific lysosomal peptidase which generates tripeptides from the breakdown products produced by lysosomal proteinases. Requires substrates with an unsubstituted N-terminus. In Danio rerio (Zebrafish), this protein is Tripeptidyl-peptidase 1.